The chain runs to 245 residues: Uridylate kinase (245 aa).

12 to 15 (KLSG) contributes to the ATP binding site. Positions 20–25 (GEKGVG) are involved in allosteric activation by GTP. Gly54 contacts UMP. Positions 55 and 59 each coordinate ATP. Residues Asp74 and 135–142 (IGSPYFST) contribute to the UMP site. Residues Asn163, Tyr169, and Asp172 each coordinate ATP.

The protein belongs to the UMP kinase family. As to quaternary structure, homohexamer.

The protein resides in the cytoplasm. The enzyme catalyses UMP + ATP = UDP + ADP. The protein operates within pyrimidine metabolism; CTP biosynthesis via de novo pathway; UDP from UMP (UMPK route): step 1/1. Its activity is regulated as follows. Allosterically activated by GTP. Inhibited by UTP. Its function is as follows. Catalyzes the reversible phosphorylation of UMP to UDP. This is Uridylate kinase from Streptococcus thermophilus (strain ATCC BAA-250 / LMG 18311).